The primary structure comprises 881 residues: Disks large homolog 2 (881 aa).

2 disordered regions span residues 16-41 and 63-88; these read HRQQNRPPAVQGSQHQSHSPACMNPA and LSTTDSPHSYRYQDDDSPPPEHSFPR. 3 PDZ domains span residues 155-242, 250-337, and 424-505; these read EITL…RRRR, EIKL…GKPT, and KIVL…QYRP. An SH3 domain is found at 539 to 609; that stretch reads KRSLYVRALF…PSKRRVERKE (71 aa). One can recognise a Guanylate kinase-like domain in the interval 683–866; sequence ARPVIILGPM…IYNQCKMVIE (184 aa). Positions 709 to 729 are disordered; the sequence is GSCVPPANSSDQEDTTRPKRD.

Belongs to the MAGUK family.

It is found in the cell membrane. Its subcellular location is the postsynaptic density. The protein localises to the synapse. The protein resides in the membrane. It localises to the cell projection. It is found in the axon. Its subcellular location is the perikaryon. Its function is as follows. May play a role in synapse assembly and function. The sequence is that of Disks large homolog 2 (dlg2) from Danio rerio (Zebrafish).